Consider the following 205-residue polypeptide: Imidazole glycerol phosphate synthase subunit HisH (205 aa).

The 203-residue stretch at 3-205 (KIGLIDYGMG…LLRRWLSNIQ (203 aa)) folds into the Glutamine amidotransferase type-1 domain. Cysteine 81 functions as the Nucleophile in the catalytic mechanism. Residues histidine 185 and glutamate 187 contribute to the active site.

Heterodimer of HisH and HisF.

The protein resides in the cytoplasm. It catalyses the reaction 5-[(5-phospho-1-deoxy-D-ribulos-1-ylimino)methylamino]-1-(5-phospho-beta-D-ribosyl)imidazole-4-carboxamide + L-glutamine = D-erythro-1-(imidazol-4-yl)glycerol 3-phosphate + 5-amino-1-(5-phospho-beta-D-ribosyl)imidazole-4-carboxamide + L-glutamate + H(+). The enzyme catalyses L-glutamine + H2O = L-glutamate + NH4(+). Its pathway is amino-acid biosynthesis; L-histidine biosynthesis; L-histidine from 5-phospho-alpha-D-ribose 1-diphosphate: step 5/9. Its function is as follows. IGPS catalyzes the conversion of PRFAR and glutamine to IGP, AICAR and glutamate. The HisH subunit catalyzes the hydrolysis of glutamine to glutamate and ammonia as part of the synthesis of IGP and AICAR. The resulting ammonia molecule is channeled to the active site of HisF. This Prochlorococcus marinus (strain MIT 9312) protein is Imidazole glycerol phosphate synthase subunit HisH.